Reading from the N-terminus, the 35-residue chain is Alpha-amanitin proprotein 1 (35 aa).

A propeptide spanning residues 1-10 is cleaved from the precursor; sequence MFDTNATRLP. I11 carries the post-translational modification (3R,4R)-4,5-dihydroxyisoleucine; in form alpha-amanitin. I11 is modified ((3R,4S)-4-hydroxyisoleucine; in form gamma-amanitin). Residues 11–18 constitute a cross-link (cyclopeptide (Ile-Pro)); the sequence is IWGIGCNP. The segment at residues 12 to 16 is a cross-link (2'-cysteinyl-6'-hydroxytryptophan sulfoxide (Trp-Cys)); it reads WGIGC. The residue at position 18 (P18) is a 4-hydroxyproline. A propeptide spanning residues 19–35 is cleaved from the precursor; the sequence is WTAEHVDQTLASGNDIC.

This sequence belongs to the MSDIN fungal toxin family. Post-translationally, processed by the macrocyclase-peptidase enzyme POPB to yield a toxic bicyclic octapeptide. POPB first removes 10 residues from the N-terminus. Conformational trapping of the remaining peptide forces the enzyme to release this intermediate rather than proceed to macrocyclization. The enzyme rebinds the remaining peptide in a different conformation and catalyzes macrocyclization of the N-terminal 8 residues.

Its function is as follows. Major toxin belonging to the bicyclic octapeptides amatoxins that acts by binding non-competitively to RNA polymerase II and greatly slowing the elongation of transcripts from target promoters. The polypeptide is Alpha-amanitin proprotein 1 (Galerina marginata (strain CBS 339.88)).